The following is a 1983-amino-acid chain: Nonribosomal peptide synthetase verP (1983 aa).

Positions 11-405 (FAQAASRCPD…FRGRKDRTVK (395 aa)) are adenylation 1. Residues 526 to 602 (DRHLDTLLTV…DVAPLITSRA (77 aa)) enclose the Carrier 1 domain. The residue at position 563 (Ser-563) is an O-(pantetheine 4'-phosphoryl)serine. The tract at residues 769–1047 (ETDELTVVLT…GQHFKHALYS (279 aa)) is condensation 1. The interval 1089-1469 (QVMGQFPSLI…GRIDRLVKLR (381 aa)) is adenylation 2. In terms of domain architecture, Carrier 2 spans 1584–1662 (ITRPKIEDKL…DQINMVRALL (79 aa)). Position 1622 is an O-(pantetheine 4'-phosphoryl)serine (Ser-1622). The interval 1652–1976 (KDQINMVRAL…GGLEHPLFEC (325 aa)) is condensation 2.

Belongs to the NRP synthetase family.

The protein operates within mycotoxin biosynthesis. Nonribosomal peptide synthetase; part of the gene cluster that mediates the biosynthesis of 11'-deoxyverticillin A, one of the dimeric epipolythiodioxopiperazines (ETPs) from the verticillin family that act as mycotoxins. 11'-deoxyverticillin A is required for normal conidiation. The nonribosomal peptide synthetase verP is speculated to be responsible for condensation of amino acids to form the carbon skeleton of verticillin, whereas the cluster-specific tailoring enzymes are involved in further modifications leading to the production of 11'-deoxyverticillin A. This Clonostachys rogersoniana protein is Nonribosomal peptide synthetase verP.